The chain runs to 213 residues: Ribonuclease HII (213 aa).

In terms of domain architecture, RNase H type-2 spans 1–206; it reads MICGVDEAGK…VSTLLAKKTQ (206 aa). Residues Asp6, Glu7, and Asp101 each coordinate a divalent metal cation.

The protein belongs to the RNase HII family. Requires Mn(2+) as cofactor. The cofactor is Mg(2+).

It localises to the cytoplasm. It catalyses the reaction Endonucleolytic cleavage to 5'-phosphomonoester.. Its function is as follows. Endonuclease that specifically degrades the RNA of RNA-DNA hybrids. This Methanoregula boonei (strain DSM 21154 / JCM 14090 / 6A8) protein is Ribonuclease HII.